The following is a 339-amino-acid chain: Adenosine deaminase (339 aa).

Zn(2+)-binding residues include His-15 and His-17. Residues His-17, Asp-19, and Gly-172 each coordinate substrate. His-199 contacts Zn(2+). The active-site Proton donor is the Glu-202. Zn(2+) is bound at residue Asp-279.

It belongs to the metallo-dependent hydrolases superfamily. Adenosine and AMP deaminases family. Adenosine deaminase subfamily. It depends on Zn(2+) as a cofactor.

It catalyses the reaction adenosine + H2O + H(+) = inosine + NH4(+). It carries out the reaction 2'-deoxyadenosine + H2O + H(+) = 2'-deoxyinosine + NH4(+). In terms of biological role, catalyzes the hydrolytic deamination of adenosine and 2-deoxyadenosine. This chain is Adenosine deaminase, found in Lacticaseibacillus casei (strain BL23) (Lactobacillus casei).